The following is a 474-amino-acid chain: Trifunctional enzyme subunit beta, mitochondrial (474 aa).

Residues 1-33 constitute a mitochondrion transit peptide; it reads MTILTYPFKNLPTASKWALRFSIRPLSCSSQLR. K72 carries the N6-acetyllysine; alternate modification. K72 carries the post-translational modification N6-succinyllysine; alternate. C138 (acyl-thioester intermediate) is an active-site residue. An intramembrane segment occupies 173–220; it reads IRHSRKMRKLMLDLNKAKSMGQRLSLISKFRFNFLAPELPAVSEFSTS. An N6-acetyllysine; alternate modification is found at K188. Residue K188 is modified to N6-succinyllysine; alternate. N6-succinyllysine is present on residues K190, K272, and K291. An N6-acetyllysine; alternate modification is found at K293. The residue at position 293 (K293) is an N6-succinyllysine; alternate. At K298 the chain carries N6-acetyllysine. K332 is subject to N6-acetyllysine; alternate. The residue at position 332 (K332) is an N6-succinyllysine; alternate. An N6-acetyllysine mark is found at K348 and K361. Catalysis depends on C458, which acts as the Proton donor/acceptor.

The protein belongs to the thiolase-like superfamily. Thiolase family. As to quaternary structure, heterotetramer of 2 alpha/HADHA and 2 beta/HADHB subunits; forms the mitochondrial trifunctional enzyme. Also purified as higher order heterooligomers including a 4 alpha/HADHA and 4 beta/HADHB heterooligomer which physiological significance remains unclear. The mitochondrial trifunctional enzyme interacts with MTLN. Interacts with RSAD2/viperin.

Its subcellular location is the mitochondrion. It is found in the mitochondrion inner membrane. The protein localises to the mitochondrion outer membrane. It localises to the endoplasmic reticulum. It carries out the reaction an acyl-CoA + acetyl-CoA = a 3-oxoacyl-CoA + CoA. It catalyses the reaction butanoyl-CoA + acetyl-CoA = 3-oxohexanoyl-CoA + CoA. The catalysed reaction is hexanoyl-CoA + acetyl-CoA = 3-oxooctanoyl-CoA + CoA. The enzyme catalyses octanoyl-CoA + acetyl-CoA = 3-oxodecanoyl-CoA + CoA. It carries out the reaction decanoyl-CoA + acetyl-CoA = 3-oxododecanoyl-CoA + CoA. It catalyses the reaction dodecanoyl-CoA + acetyl-CoA = 3-oxotetradecanoyl-CoA + CoA. The catalysed reaction is tetradecanoyl-CoA + acetyl-CoA = 3-oxohexadecanoyl-CoA + CoA. The protein operates within lipid metabolism; fatty acid beta-oxidation. In terms of biological role, mitochondrial trifunctional enzyme catalyzes the last three of the four reactions of the mitochondrial beta-oxidation pathway. The mitochondrial beta-oxidation pathway is the major energy-producing process in tissues and is performed through four consecutive reactions breaking down fatty acids into acetyl-CoA. Among the enzymes involved in this pathway, the trifunctional enzyme exhibits specificity for long-chain fatty acids. Mitochondrial trifunctional enzyme is a heterotetrameric complex composed of two proteins, the trifunctional enzyme subunit alpha/HADHA carries the 2,3-enoyl-CoA hydratase and the 3-hydroxyacyl-CoA dehydrogenase activities, while the trifunctional enzyme subunit beta/HADHB described here bears the 3-ketoacyl-CoA thiolase activity. The sequence is that of Trifunctional enzyme subunit beta, mitochondrial (HADHB) from Homo sapiens (Human).